Consider the following 580-residue polypeptide: Micronemal protein 4 (580 aa).

Positions 1-25 are cleaved as a signal peptide; it reads MRASLPVHLVVCTQLSAVWFGVAKA. Apple domains lie at 68 to 137, 141 to 214, 232 to 301, 305 to 375, 419 to 488, and 492 to 565; these read CVHS…SRSC, CFEQ…KQFC, CIQL…PKSC, CFSN…VTVG, CVHT…SRTC, and CLRR…YTFC. Intrachain disulfides connect Cys-68–Cys-137, Cys-93–Cys-115, Cys-97–Cys-103, Cys-141–Cys-214, Cys-166–Cys-188, Cys-170–Cys-176, Cys-232–Cys-301, Cys-257–Cys-279, Cys-261–Cys-267, Cys-305–Cys-380, Cys-332–Cys-354, Cys-336–Cys-342, Cys-419–Cys-488, Cys-444–Cys-466, and Cys-448–Cys-454.

Monomer. Part of the MIC6-MIC1-MIC4 complex. Interacts (via the second apple domain) directly with MIC1 (via the beta-finger region). Interacts with murine TLR2; the interaction promotes activation of bone marrow-derived dendritic cells and macrophages in the host. Interacts with murine TLR4; the interaction promotes activation of bone marrow-derived dendritic cells and macrophages in the host. In terms of processing, proteolytically cleaved at the N- and C-terminus after release from the microneme.

Its subcellular location is the cytoplasmic vesicle. It localises to the secretory vesicle. The protein resides in the microneme. It is found in the host early endosome. Its activity is regulated as follows. Lacto-N-biose inhibits binding to asialofetuin, a host glycoprotein. Functionally, soluble adhesin with carbohydrate-binding activity. Binds to galactose-terminating oligosaccharides. Required for attachment of the parasite to the host cell prior to invasion. Triggers the activation of murine bone marrow-derived dendritic cells and macrophages and production of pro-inflammatory cytokines, such as IL12 (IL12B/IL12A), in host TLR2/TLR4-dependent manner. Triggers the production of anti-inflammatory cytokine IL10 in murine bone marrow-derived macrophages in host TLR4-dependent manner. Induces transient endotoxin tolerance in murine bone marrow-derived macrophages, manifested by reduced TNF-alpha (TNF) production in response to challenge with lipopolysaccharides (LPS). The chain is Micronemal protein 4 from Toxoplasma gondii.